The sequence spans 207 residues: Putative 3-methyladenine DNA glycosylase (207 aa).

Belongs to the DNA glycosylase MPG family.

This is Putative 3-methyladenine DNA glycosylase from Burkholderia orbicola (strain MC0-3).